Consider the following 314-residue polypeptide: Acetyl-coenzyme A carboxylase carboxyl transferase subunit beta, chloroplastic (314 aa).

The CoA carboxyltransferase N-terminal domain occupies 47–314 (LWTRCDNCEN…APWKEKNNQV (268 aa)). Positions 51, 54, 70, and 73 each coordinate Zn(2+). The C4-type zinc-finger motif lies at 51-73 (CDNCENMLYIKFLKQNKGVCEEC).

It belongs to the AccD/PCCB family. In terms of assembly, acetyl-CoA carboxylase is a heterohexamer composed of biotin carboxyl carrier protein, biotin carboxylase and 2 subunits each of ACCase subunit alpha and ACCase plastid-coded subunit beta (accD). Zn(2+) is required as a cofactor.

The protein resides in the plastid. It localises to the chloroplast stroma. The catalysed reaction is N(6)-carboxybiotinyl-L-lysyl-[protein] + acetyl-CoA = N(6)-biotinyl-L-lysyl-[protein] + malonyl-CoA. The protein operates within lipid metabolism; malonyl-CoA biosynthesis; malonyl-CoA from acetyl-CoA: step 1/1. Functionally, component of the acetyl coenzyme A carboxylase (ACC) complex. Biotin carboxylase (BC) catalyzes the carboxylation of biotin on its carrier protein (BCCP) and then the CO(2) group is transferred by the transcarboxylase to acetyl-CoA to form malonyl-CoA. This Angiopteris lygodiifolia (Turnip fern) protein is Acetyl-coenzyme A carboxylase carboxyl transferase subunit beta, chloroplastic.